The primary structure comprises 99 residues: Integration host factor subunit alpha (99 aa).

Positions 49 to 73 (FGNFDLRDKNQRPGRNPKTGEDIPI) are disordered.

It belongs to the bacterial histone-like protein family. Heterodimer of an alpha and a beta chain.

Its function is as follows. This protein is one of the two subunits of integration host factor, a specific DNA-binding protein that functions in genetic recombination as well as in transcriptional and translational control. This is Integration host factor subunit alpha from Shigella boydii serotype 18 (strain CDC 3083-94 / BS512).